A 116-amino-acid chain; its full sequence is Large ribosomal subunit protein bL17 (116 aa).

It belongs to the bacterial ribosomal protein bL17 family. As to quaternary structure, part of the 50S ribosomal subunit. Contacts protein L32.

The protein is Large ribosomal subunit protein bL17 of Synechococcus sp. (strain CC9311).